A 69-amino-acid chain; its full sequence is DNA-directed RNA polymerase subunit epsilon (69 aa).

Belongs to the RNA polymerase subunit epsilon family. As to quaternary structure, monomer. RNAP is composed of a core of 2 alpha, a beta and a beta' subunit. The core is associated with a delta subunit, and at least one of epsilon or omega. When a sigma factor is associated with the core the holoenzyme is formed, which can initiate transcription.

The protein resides in the cytoplasm. It localises to the nucleoid. It carries out the reaction RNA(n) + a ribonucleoside 5'-triphosphate = RNA(n+1) + diphosphate. In terms of biological role, a non-essential component of RNA polymerase (RNAP). Has a similar structure to bacteriophage T7 protein Gp2 (AC P03704), which is known to bind to RNAP in the DNA binding-cleft. Unlike Gp2 however, this protein does not inhibit transcription initiation. In vitro reconstitution experiments show this subunit is dispensible. This chain is DNA-directed RNA polymerase subunit epsilon, found in Bacillus subtilis (strain 168).